A 291-amino-acid chain; its full sequence is Inactive dihydropteroate synthase 2 (291 aa).

Residues 15 to 272 (QLIMAIVNRT…EVVATRRVLE (258 aa)) form the Pterin-binding domain.

It belongs to the DHPS family. Homodimer.

In terms of biological role, has very low affinity for the DHPS substrate 6-hydroxymethyl-7,8-dihydropterin-pyrophosphate, but can bind the inhibitor dapsone. Seems to lack dihydropteroate synthase activity, and does probably not function in folate metabolism. This is Inactive dihydropteroate synthase 2 (folP2) from Mycobacterium leprae (strain TN).